Consider the following 90-residue polypeptide: UPF0367 protein P9301_01411 (90 aa).

Belongs to the UPF0367 family.

The chain is UPF0367 protein P9301_01411 from Prochlorococcus marinus (strain MIT 9301).